Consider the following 544-residue polypeptide: Chaperonin GroEL (544 aa).

ATP is bound by residues 30–33 (TLGP), Lys-51, 87–91 (DGTTT), Gly-415, and Asp-495.

This sequence belongs to the chaperonin (HSP60) family. In terms of assembly, forms a cylinder of 14 subunits composed of two heptameric rings stacked back-to-back. Interacts with the co-chaperonin GroES.

It localises to the cytoplasm. The catalysed reaction is ATP + H2O + a folded polypeptide = ADP + phosphate + an unfolded polypeptide.. In terms of biological role, together with its co-chaperonin GroES, plays an essential role in assisting protein folding. The GroEL-GroES system forms a nano-cage that allows encapsulation of the non-native substrate proteins and provides a physical environment optimized to promote and accelerate protein folding. The chain is Chaperonin GroEL from Bartonella bacilliformis.